The sequence spans 400 residues: uncharacterized protein (400 aa).

The first 23 residues, Met-1 to Ala-23, serve as a signal peptide directing secretion.

This is an uncharacterized protein from Archaeoglobus fulgidus (strain ATCC 49558 / DSM 4304 / JCM 9628 / NBRC 100126 / VC-16).